Consider the following 379-residue polypeptide: Alcohol dehydrogenase 1 (379 aa).

Zn(2+) contacts are provided by Cys47, Thr49, His69, Cys99, Cys102, Cys105, Cys113, and Cys177. Residues Thr49 and His69 each contribute to the an alcohol site. Residue Thr49 participates in NAD(+) binding. Residues 202-207 (GLGAVG), Asp226, Arg231, Thr272, Val295, 295-297 (VGV), Phe322, and Arg372 each bind NAD(+).

This sequence belongs to the zinc-containing alcohol dehydrogenase family. Homodimer. Requires Zn(2+) as cofactor.

It localises to the cytoplasm. The catalysed reaction is a primary alcohol + NAD(+) = an aldehyde + NADH + H(+). It catalyses the reaction a secondary alcohol + NAD(+) = a ketone + NADH + H(+). This Oryza sativa subsp. indica (Rice) protein is Alcohol dehydrogenase 1 (ADH1).